Consider the following 243-residue polypeptide: 1-(5-phosphoribosyl)-5-[(5-phosphoribosylamino)methylideneamino] imidazole-4-carboxamide isomerase (243 aa).

The Proton acceptor role is filled by Asp14. Asp135 serves as the catalytic Proton donor.

It belongs to the HisA/HisF family.

It localises to the cytoplasm. The enzyme catalyses 1-(5-phospho-beta-D-ribosyl)-5-[(5-phospho-beta-D-ribosylamino)methylideneamino]imidazole-4-carboxamide = 5-[(5-phospho-1-deoxy-D-ribulos-1-ylimino)methylamino]-1-(5-phospho-beta-D-ribosyl)imidazole-4-carboxamide. Its pathway is amino-acid biosynthesis; L-histidine biosynthesis; L-histidine from 5-phospho-alpha-D-ribose 1-diphosphate: step 4/9. The chain is 1-(5-phosphoribosyl)-5-[(5-phosphoribosylamino)methylideneamino] imidazole-4-carboxamide isomerase from Rubrobacter xylanophilus (strain DSM 9941 / JCM 11954 / NBRC 16129 / PRD-1).